Reading from the N-terminus, the 803-residue chain is MANPIRKLVDNSKQQLKKLNKIADQVESYADTMASMSDSELQAKTGEFKSKIADAIDGIEDKDKQNKALAKVLDELLPEAFAVAREGAKRVLGLYPFHVQIMGSIVLHGGNLAEMRTGEGKTLTATMAVYLNALSGRGVHVVTVNDYLSARDAEQMGQLYNWLGLTVGVNVGDAPAEEKRAAYNADITYSTNFNIGFDYLRDNMVRRADERVMQRGLNFALIDEADSILIDTARTPLIISGPGSGVSQLYARADRFVKTLQRDEDFKVDEEAKATLLTPEGIHKGEIFFNLNNLYDADDTALTHHIDQALRANFNYIKDKDYVVQDGEVKLIDQSTGRISEGTRLSDGLHQAIEAKENVEIQEENKSMAQITYQNLFRMYKKLSGMTGTAKTEEEELREIYNMEVISIPTNRPVRRVDKPDLLYTSIRAKYNAVVKLIVELHEKGQPILIGTGSVEDSELLSKILMTKNLPHNVLNAKNNAKEAEIIANAGQRGAITVATNMAGRGTDIKLGPGVAELGGLVVIATERHESRRIDNQLRGRAGRQGDEGFSQFFLSLEDDLMIRFGAERVRLMMQRMNLDEDTVITNRFITRSVESAQKRVEGNNYDTRKNVLQYDDVVREQRELIYHERDVVIDESESLEWVLMPMVERTINRVVDAQTKEKKSSDWNLPQIVAFVGNALAHDDAVTVQQLQGLTRDEIKAKLLELAKLNYKEKQSQLYDPEQMLEFEKVVILRAVDQHWTDHIDSLDRLRQGVGLRGYGQLNPLIEYQSEAFANFQKMIADVEYDTTRTFMKAEIRQNLRS.

ATP is bound by residues glutamine 100, 118 to 122 (GEGKT), and aspartate 508.

This sequence belongs to the SecA family. As to quaternary structure, monomer and homodimer. Part of the essential Sec protein translocation apparatus which comprises SecA, SecYEG and auxiliary proteins SecDF. Other proteins may also be involved.

Its subcellular location is the cell membrane. The protein resides in the cytoplasm. The catalysed reaction is ATP + H2O + cellular proteinSide 1 = ADP + phosphate + cellular proteinSide 2.. Functionally, part of the Sec protein translocase complex. Interacts with the SecYEG preprotein conducting channel. Has a central role in coupling the hydrolysis of ATP to the transfer of proteins into and across the cell membrane, serving as an ATP-driven molecular motor driving the stepwise translocation of polypeptide chains across the membrane. The protein is Protein translocase subunit SecA of Leuconostoc mesenteroides subsp. mesenteroides (strain ATCC 8293 / DSM 20343 / BCRC 11652 / CCM 1803 / JCM 6124 / NCDO 523 / NBRC 100496 / NCIMB 8023 / NCTC 12954 / NRRL B-1118 / 37Y).